We begin with the raw amino-acid sequence, 192 residues long: ADP-ribosylation factor-like protein 14 (192 aa).

Residue glycine 2 is the site of N-myristoyl glycine attachment. GTP contacts are provided by residues 20 to 27 (GLDSAGKS), 64 to 68 (DVGGQ), and 124 to 127 (NKQD).

Belongs to the small GTPase superfamily. Arf family. Interacts with ARL14EP.

It is found in the cytoplasmic vesicle. In terms of biological role, GTPase that recruits MYO1E to MHC class II-containing vesicles via the effector protein ARL14EP and hence controls the movement of these vesicles along the actin cytoskeleton in dendritic cells. This Mus musculus (Mouse) protein is ADP-ribosylation factor-like protein 14 (Arl14).